We begin with the raw amino-acid sequence, 900 residues long: Formin-like protein 5 (900 aa).

Residues 15–32 form a helical; Signal-anchor membrane-spanning segment; that stretch reads SRLVFWLILFSGLLVITL. Residues 136–209 are disordered; the sequence is RNLATKPGSS…PVSPAKKKED (74 aa). Pro residues predominate over residues 160–173; that stretch reads PPRPPTRPKSPPPR. A helical membrane pass occupies residues 214–234; sequence IIIAVVVTAVSTFLLAALFFL. 2 disordered regions span residues 273 to 440 and 849 to 900; these read SVKG…DAPK and ARGR…SDSD. Residues 281–304 show a composition bias toward polar residues; it reads HQSFNIYSNQGKMSSFDGSNSDTS. Positions 307–316 are enriched in basic and acidic residues; sequence LEERLSHEGL. Over residues 359 to 368 the composition is skewed to low complexity; sequence FLKVSSKKAS. Over residues 369-429 the composition is skewed to pro residues; it reads APPPPVPAPQ…GPKAPRPPSG (61 aa). The region spanning 433–865 is the FH2 domain; the sequence is ALDDDAPKTK…MARKQGSTAS (433 aa). Residues 860–876 show a composition bias toward polar residues; that stretch reads QGSTASASSETPRQTPS.

It belongs to the formin-like family. Class-I subfamily. In terms of tissue distribution, expressed in the endosperm. Localizes to the cell plate, a plant-specific membranous component that is assembled at the plane of cell division.

It localises to the membrane. In terms of biological role, might be involved in the organization and polarity of the actin cytoskeleton. Interacts with the barbed end of actin filaments and nucleates actin-filament polymerization in vitro. Seems to play a role in cytokinesis. This chain is Formin-like protein 5 (FH5), found in Arabidopsis thaliana (Mouse-ear cress).